The primary structure comprises 165 residues: LIM domain transcription factor LMO4 (165 aa).

2 LIM zinc-binding domains span residues 23–83 (CAGC…LFGN) and 87–147 (CSAC…ALIN).

Interacts strongly with LDBS. Interacts with LDB2 and LDB1. Interaction with complexes consisting of at least LDB1 and LHX3 acts to disassemble the complex; may preferentially disassemble LDB1-LHX3 complexes rather than complexes consisting of LDB1, LHX3 and ISL1. Interacts (via the LIM zinc-binding domain 1) with RBBP8. Interacts with both RPPB8 and LDB1 through the same face and cannot bind to both proteins simultaneously. Interacts with BRCA1 (via the BRCT domains); the interaction represses BRCA1 transcriptional activity. Interacts with DEAF1; LMO4 blocks export from nucleus.

Functionally, transcription cofactor. Plays a role in establishing motor neuron identity, in concert with MNX1, acting, at least in part, to disrupt LDB1-LHX3 complexes thereby negatively modulating interneuron genes in motor neurons. This Bos taurus (Bovine) protein is LIM domain transcription factor LMO4 (LMO4).